A 349-amino-acid polypeptide reads, in one-letter code: Quinone oxidoreductase-like protein 1 (349 aa).

It belongs to the zinc-containing alcohol dehydrogenase family. Quinone oxidoreductase subfamily. As to quaternary structure, homodimer. Component of the FERRY complex composed of five subunits, TBCK, PPP1R21, FERRY3, CRYZL1 and GATD1 with a ratio of 1:2:1:2:4, respectively. Ubiquitous.

The protein resides in the early endosome. In terms of biological role, component of the FERRY complex (Five-subunit Endosomal Rab5 and RNA/ribosome intermediary). The FERRY complex directly interacts with mRNAs and RAB5A, and functions as a RAB5A effector involved in the localization and the distribution of specific mRNAs most likely by mediating their endosomal transport. The complex recruits mRNAs and ribosomes to early endosomes through direct mRNA-interaction. The sequence is that of Quinone oxidoreductase-like protein 1 (CRYZL1) from Homo sapiens (Human).